A 249-amino-acid chain; its full sequence is MNYRDELILQWVNQQGKASVIELAQHCDISVETIRRDLNKLANKGLLHRTHGGAVSNKTKDLGSFFQTRKHINATAKRHIAQKALDLLYENAVIGLDASSTSWYFAYLMPDIPCTVVTNSMFNINALVNKSNVKTIVTGGVYSAKYEAFYGPLSEYLLQRLHINFSVFSCSGIDKNGNIWESNELNASLKRKMMEASERAYLLIDSSKFEKTSLIQLADLSKINTIFSDRSLPDNLQKYCEQHDIMTVL.

Residues Met1–Ser56 form the HTH deoR-type domain. A DNA-binding region (H-T-H motif) is located at residues Ala18 to Asp37.

Functionally, transcriptional activator of the fuc operon. This Haemophilus influenzae (strain ATCC 51907 / DSM 11121 / KW20 / Rd) protein is L-fucose operon activator (fucR).